The primary structure comprises 619 residues: E3 ubiquitin-protein ligase DTX4 (619 aa).

2 WWE domains span residues 1–78 and 79–155; these read MLLA…PVRR and NYYD…RVRR. 2 disordered regions span residues 238-281 and 358-389; these read KPLD…PGPN and PPPVSKSEIKSIPGVSNTSRKTTKKQAKKGKT. The segment covering 261 to 273 has biased composition (polar residues); the sequence is QASSMPTGTTMGS. The segment covering 378 to 387 has biased composition (basic residues); the sequence is KTTKKQAKKG. The segment at 409–468 adopts an RING-type; atypical zinc-finger fold; sequence CTICMERLTAPSGYKGPQPTVKPDLVGKLSRCGHVYHIYCLVAMYNNGNKDGSLQCPTCK.

This sequence belongs to the Deltex family. Interacts with NLRP4.

It is found in the cytoplasm. The enzyme catalyses S-ubiquitinyl-[E2 ubiquitin-conjugating enzyme]-L-cysteine + [acceptor protein]-L-lysine = [E2 ubiquitin-conjugating enzyme]-L-cysteine + N(6)-ubiquitinyl-[acceptor protein]-L-lysine.. Its pathway is protein modification; protein ubiquitination. Its function is as follows. Regulator of Notch signaling, a signaling pathway involved in cell-cell communications that regulates a broad spectrum of cell-fate determinations. Functions as a ubiquitin ligase protein in vivo, mediating 'Lys48'-linked polyubiquitination and promoting degradation of TBK1, targeting to TBK1 requires interaction with NLRP4. This is E3 ubiquitin-protein ligase DTX4 (DTX4) from Homo sapiens (Human).